The primary structure comprises 347 residues: N-acetyl-gamma-glutamyl-phosphate reductase (347 aa).

C152 is a catalytic residue.

The protein belongs to the NAGSA dehydrogenase family. Type 1 subfamily.

Its subcellular location is the cytoplasm. The enzyme catalyses N-acetyl-L-glutamate 5-semialdehyde + phosphate + NADP(+) = N-acetyl-L-glutamyl 5-phosphate + NADPH + H(+). Its pathway is amino-acid biosynthesis; L-arginine biosynthesis; N(2)-acetyl-L-ornithine from L-glutamate: step 3/4. In terms of biological role, catalyzes the NADPH-dependent reduction of N-acetyl-5-glutamyl phosphate to yield N-acetyl-L-glutamate 5-semialdehyde. The sequence is that of N-acetyl-gamma-glutamyl-phosphate reductase from Neisseria meningitidis serogroup C / serotype 2a (strain ATCC 700532 / DSM 15464 / FAM18).